We begin with the raw amino-acid sequence, 137 residues long: Nucleoside diphosphate kinase (137 aa).

ATP is bound by residues K9, F57, R85, T91, R102, and N112. The active-site Pros-phosphohistidine intermediate is the H115.

This sequence belongs to the NDK family. As to quaternary structure, homotetramer. Mg(2+) serves as cofactor.

It localises to the cytoplasm. The enzyme catalyses a 2'-deoxyribonucleoside 5'-diphosphate + ATP = a 2'-deoxyribonucleoside 5'-triphosphate + ADP. The catalysed reaction is a ribonucleoside 5'-diphosphate + ATP = a ribonucleoside 5'-triphosphate + ADP. Major role in the synthesis of nucleoside triphosphates other than ATP. The ATP gamma phosphate is transferred to the NDP beta phosphate via a ping-pong mechanism, using a phosphorylated active-site intermediate. This chain is Nucleoside diphosphate kinase, found in Thermus thermophilus (strain ATCC 27634 / DSM 579 / HB8).